The sequence spans 432 residues: 3-phosphoshikimate 1-carboxyvinyltransferase (432 aa).

The 3-phosphoshikimate site is built by lysine 23, serine 24, and arginine 28. Position 23 (lysine 23) interacts with phosphoenolpyruvate. Glycine 95 and arginine 123 together coordinate phosphoenolpyruvate. Positions 167, 169, 317, and 344 each coordinate 3-phosphoshikimate. Phosphoenolpyruvate is bound at residue glutamine 169. Aspartate 317 acts as the Proton acceptor in catalysis. Arginine 348 and arginine 390 together coordinate phosphoenolpyruvate.

Belongs to the EPSP synthase family. Monomer.

It is found in the cytoplasm. It catalyses the reaction 3-phosphoshikimate + phosphoenolpyruvate = 5-O-(1-carboxyvinyl)-3-phosphoshikimate + phosphate. Its pathway is metabolic intermediate biosynthesis; chorismate biosynthesis; chorismate from D-erythrose 4-phosphate and phosphoenolpyruvate: step 6/7. Functionally, catalyzes the transfer of the enolpyruvyl moiety of phosphoenolpyruvate (PEP) to the 5-hydroxyl of shikimate-3-phosphate (S3P) to produce enolpyruvyl shikimate-3-phosphate and inorganic phosphate. The chain is 3-phosphoshikimate 1-carboxyvinyltransferase from Staphylococcus saprophyticus subsp. saprophyticus (strain ATCC 15305 / DSM 20229 / NCIMB 8711 / NCTC 7292 / S-41).